The sequence spans 83 residues: uncharacterized protein (83 aa).

This sequence belongs to the chlamydial CPn_0711/CT_665/TC_0036 family.

This is an uncharacterized protein from Chlamydia trachomatis serovar D (strain ATCC VR-885 / DSM 19411 / UW-3/Cx).